Here is a 240-residue protein sequence, read N- to C-terminus: Dihydromonapterin reductase (240 aa).

Catalysis depends on Tyr152, which acts as the Proton acceptor.

Belongs to the short-chain dehydrogenases/reductases (SDR) family. FolM subfamily.

The catalysed reaction is (6S)-5,6,7,8-tetrahydrofolate + NADP(+) = 7,8-dihydrofolate + NADPH + H(+). It carries out the reaction 7,8-dihydromonapterin + NADPH + H(+) = 5,6,7,8-tetrahydromonapterin + NADP(+). Catalyzes the reduction of dihydromonapterin to tetrahydromonapterin. Also has lower activity with dihydrofolate. The chain is Dihydromonapterin reductase (folM) from Escherichia coli (strain SMS-3-5 / SECEC).